We begin with the raw amino-acid sequence, 425 residues long: Serine--tRNA ligase (425 aa).

L-serine is bound at residue 233–235; the sequence is TAE. 264 to 266 is a binding site for ATP; that stretch reads RRE. E287 is a binding site for L-serine. Residue 351–354 participates in ATP binding; it reads EISS. L-serine is bound at residue S385.

Belongs to the class-II aminoacyl-tRNA synthetase family. Type-1 seryl-tRNA synthetase subfamily. Homodimer. The tRNA molecule binds across the dimer.

Its subcellular location is the cytoplasm. It catalyses the reaction tRNA(Ser) + L-serine + ATP = L-seryl-tRNA(Ser) + AMP + diphosphate + H(+). The enzyme catalyses tRNA(Sec) + L-serine + ATP = L-seryl-tRNA(Sec) + AMP + diphosphate + H(+). Its pathway is aminoacyl-tRNA biosynthesis; selenocysteinyl-tRNA(Sec) biosynthesis; L-seryl-tRNA(Sec) from L-serine and tRNA(Sec): step 1/1. Functionally, catalyzes the attachment of serine to tRNA(Ser). Is also able to aminoacylate tRNA(Sec) with serine, to form the misacylated tRNA L-seryl-tRNA(Sec), which will be further converted into selenocysteinyl-tRNA(Sec). This Prochlorococcus marinus (strain AS9601) protein is Serine--tRNA ligase.